The sequence spans 252 residues: MERLLIVNADDFGLSKGQNYGIIEACRNGIVTSTTALVNGQAIDHAVQLSRDEPSLAIGMHFVLTMGKPLTVMPGLTRDGVLGKWIWQLAEEDALPLEEITQELASQYLRFIELFGRKPTHLDSHHHVHMFPQIFPIVAKFAAEEGIALRIDRQPLSNDGDLPANLRSSQGFSSAFYGEEISEALFLQVLDDSSHRGERSLEVMCHPAFVDNTIRQSAYCFPRLTELDVLTSASLKYAIAERGYRLGSYHDV.

The Mg(2+) site is built by histidine 61 and histidine 125.

It belongs to the YdjC deacetylase family. ChbG subfamily. Homodimer. Mg(2+) serves as cofactor.

It is found in the cytoplasm. It catalyses the reaction N,N'-diacetylchitobiose + H2O = N-acetyl-beta-D-glucosaminyl-(1-&gt;4)-D-glucosamine + acetate. It carries out the reaction diacetylchitobiose-6'-phosphate + H2O = N'-monoacetylchitobiose-6'-phosphate + acetate. It participates in glycan degradation; chitin degradation. Functionally, involved in the degradation of chitin. ChbG is essential for growth on the acetylated chitooligosaccharides chitobiose and chitotriose but is dispensable for growth on cellobiose and chitosan dimer, the deacetylated form of chitobiose. Deacetylation of chitobiose-6-P and chitotriose-6-P is necessary for both the activation of the chb promoter by the regulatory protein ChbR and the hydrolysis of phosphorylated beta-glucosides by the phospho-beta-glucosidase ChbF. Catalyzes the removal of only one acetyl group from chitobiose-6-P to yield monoacetylchitobiose-6-P, the inducer of ChbR and the substrate of ChbF. The chain is Chitooligosaccharide deacetylase from Escherichia coli O6:K15:H31 (strain 536 / UPEC).